Reading from the N-terminus, the 632-residue chain is 1-deoxy-D-xylulose-5-phosphate synthase (632 aa).

Thiamine diphosphate contacts are provided by residues histidine 87 and 128–130; that span reads GHS. Residue aspartate 159 participates in Mg(2+) binding. Thiamine diphosphate contacts are provided by residues 160 to 161, asparagine 188, phenylalanine 295, and glutamate 378; that span reads GA. A Mg(2+)-binding site is contributed by asparagine 188.

The protein belongs to the transketolase family. DXPS subfamily. As to quaternary structure, homodimer. Requires Mg(2+) as cofactor. The cofactor is thiamine diphosphate.

It carries out the reaction D-glyceraldehyde 3-phosphate + pyruvate + H(+) = 1-deoxy-D-xylulose 5-phosphate + CO2. It participates in metabolic intermediate biosynthesis; 1-deoxy-D-xylulose 5-phosphate biosynthesis; 1-deoxy-D-xylulose 5-phosphate from D-glyceraldehyde 3-phosphate and pyruvate: step 1/1. Its function is as follows. Catalyzes the acyloin condensation reaction between C atoms 2 and 3 of pyruvate and glyceraldehyde 3-phosphate to yield 1-deoxy-D-xylulose-5-phosphate (DXP). This Pseudomonas fluorescens (strain SBW25) protein is 1-deoxy-D-xylulose-5-phosphate synthase.